We begin with the raw amino-acid sequence, 357 residues long: MNSDISNISLDATPRLTSLSHGGGCGCKIAPGVLSELLAKSNLPKQFFPDLLVGTETADDAAVYKINDEQAIVATTDFFMPIVDDPYDFGRIAATNALSDIYAMGGTPLMALAIVGMPINVLPHDVIAKILEGGESVCRDAGIPLAGGHSIDSVEPIYGLVGIGIVNPKQMKRNADAKDGDVLILGKPLGVGILSAALKKNLLDDAGYRAMVDATTKLNRPGTELAKLDGVHALTDVTGFGLLGHGLELARGAQLSARIDSAKLPMLPGVQALAEQGIFTGASGRNWASYGEHVELASSLTDAQKALLTDPQTSGGLLVSCTQDVVHQVLQVFADSGFAEAAVIGRMEAGAPKVFVG.

The active site involves cysteine 25. ATP-binding positions include lysine 28 and 57 to 59 (TAD). Aspartate 60 contacts Mg(2+). Residues aspartate 77, aspartate 100, and 148–150 (GHS) contribute to the ATP site. Aspartate 100 serves as a coordination point for Mg(2+). Aspartate 236 is a binding site for Mg(2+).

This sequence belongs to the selenophosphate synthase 1 family. Class I subfamily. As to quaternary structure, homodimer. Requires Mg(2+) as cofactor.

The catalysed reaction is hydrogenselenide + ATP + H2O = selenophosphate + AMP + phosphate + 2 H(+). In terms of biological role, synthesizes selenophosphate from selenide and ATP. This chain is Selenide, water dikinase, found in Pseudomonas straminea.